A 134-amino-acid chain; its full sequence is Protein Turandot E (134 aa).

An N-terminal signal peptide occupies residues 1-38; sequence MSYTRTVHSSTSILKMNSALQISCLLVVLGCLLGSGHC.

This sequence belongs to the Turandot family.

It is found in the secreted. Its function is as follows. A humoral factor that may play a role in stress tolerance. The polypeptide is Protein Turandot E (Drosophila simulans (Fruit fly)).